Reading from the N-terminus, the 266-residue chain is Thiazole synthase (266 aa).

The active-site Schiff-base intermediate with DXP is Lys-95. 1-deoxy-D-xylulose 5-phosphate is bound by residues Gly-156, 182 to 183, and 204 to 205; these read AG and NT.

Belongs to the ThiG family. In terms of assembly, homotetramer. Forms heterodimers with either ThiH or ThiS.

The protein resides in the cytoplasm. It catalyses the reaction [ThiS sulfur-carrier protein]-C-terminal-Gly-aminoethanethioate + 2-iminoacetate + 1-deoxy-D-xylulose 5-phosphate = [ThiS sulfur-carrier protein]-C-terminal Gly-Gly + 2-[(2R,5Z)-2-carboxy-4-methylthiazol-5(2H)-ylidene]ethyl phosphate + 2 H2O + H(+). The protein operates within cofactor biosynthesis; thiamine diphosphate biosynthesis. In terms of biological role, catalyzes the rearrangement of 1-deoxy-D-xylulose 5-phosphate (DXP) to produce the thiazole phosphate moiety of thiamine. Sulfur is provided by the thiocarboxylate moiety of the carrier protein ThiS. In vitro, sulfur can be provided by H(2)S. The sequence is that of Thiazole synthase from Shewanella denitrificans (strain OS217 / ATCC BAA-1090 / DSM 15013).